The following is a 290-amino-acid chain: Sodium/potassium-transporting ATPase subunit beta-2 (290 aa).

The Cytoplasmic portion of the chain corresponds to 1–39 (MVIQKEKKSCGQVVEEWKEFVWNPRTHQFMGRTGTSWAF). A helical; Signal-anchor for type II membrane protein transmembrane segment spans residues 40–67 (ILLFYLVFYGFLTAMFTLTMWVMLQTVS). Residues 68-290 (DHTPKYQDRL…VAFKLRINKT (223 aa)) lie on the Extracellular side of the membrane. N96 and N118 each carry an N-linked (GlcNAc...) asparagine glycan. C129 and C150 are disulfide-bonded. 2 N-linked (GlcNAc...) asparagine glycosylation sites follow: N153 and N159. A disulfide bridge connects residues C160 and C177. Residues N193, N197, and N238 are each glycosylated (N-linked (GlcNAc...) asparagine). The tract at residues 193–290 (NQSMNVTCAG…VAFKLRINKT (98 aa)) is immunoglobulin-like. A disulfide bond links C200 and C261.

This sequence belongs to the X(+)/potassium ATPases subunit beta family. As to quaternary structure, the sodium/potassium-transporting ATPase is composed of a catalytic alpha subunit, an auxiliary non-catalytic beta subunit and an additional regulatory subunit. Interacts with isoform 2 of BSG.

It is found in the cell membrane. Functionally, this is the non-catalytic component of the active enzyme, which catalyzes the hydrolysis of ATP coupled with the exchange of Na(+) and K(+) ions across the plasma membrane. The exact function of the beta-2 subunit is not known. Its function is as follows. Mediates cell adhesion of neurons and astrocytes, and promotes neurite outgrowth. The chain is Sodium/potassium-transporting ATPase subunit beta-2 (ATP1B2) from Homo sapiens (Human).